The primary structure comprises 786 residues: Calcium-independent phospholipase A2-gamma (786 aa).

Asparagine 4 is a glycosylation site (N-linked (GlcNAc...) asparagine). Disordered stretches follow at residues 158-180, 225-285, and 321-348; these read KKYS…IIDK, KENS…SLPI, and SKSQ…EEKK. Residues 225–245 are compositionally biased toward basic and acidic residues; that stretch reads KENSHFQEKSELEGKKVEEGK. 2 stretches are compositionally biased toward polar residues: residues 246 to 258 and 266 to 285; these read SSSL…TSQA and SAGT…SLPI. Positions 449 to 644 constitute a PNPLA domain; sequence LTIDGGGTRG…LLNNPSALAM (196 aa). The GXGXXG motif lies at 453 to 458; that stretch reads GGGTRG. Residues 483–503 traverse the membrane as a helical segment; that stretch reads ICGVSTGAILAFMLGLFHLPL. Positions 485–489 match the GXSXG motif; that stretch reads GVSTG. The active-site Nucleophile is the serine 487. Residue aspartate 631 is the Proton acceptor of the active site. The DGA/G motif lies at 631-633; the sequence is DGG. An N6-succinyllysine modification is found at lysine 740.

In terms of tissue distribution, expressed in kidney, heart and brain.

Its subcellular location is the endoplasmic reticulum membrane. It is found in the mitochondrion membrane. It localises to the peroxisome membrane. It carries out the reaction a 1,2-diacyl-sn-glycero-3-phosphocholine + H2O = a 1-acyl-sn-glycero-3-phosphocholine + a fatty acid + H(+). The enzyme catalyses a 1,2-diacyl-sn-glycero-3-phosphocholine + H2O = a 2-acyl-sn-glycero-3-phosphocholine + a fatty acid + H(+). It catalyses the reaction a 1,2-diacyl-sn-glycero-3-phosphoethanolamine + H2O = a 1-acyl-sn-glycero-3-phosphoethanolamine + a fatty acid + H(+). The catalysed reaction is a 1-O-(1Z-alkenyl)-2-acyl-sn-glycero-3-phosphocholine + H2O = a 1-O-(1Z-alkenyl)-sn-glycero-3-phosphocholine + a fatty acid + H(+). It carries out the reaction a 1-acyl-sn-glycero-3-phosphocholine + H2O = sn-glycerol 3-phosphocholine + a fatty acid + H(+). The enzyme catalyses 1-acyl-2-(9Z,12Z)-octadecadienoyl-sn-glycero-3-phosphocholine + H2O = a 1-acyl-sn-glycero-3-phosphocholine + (9Z,12Z)-octadecadienoate + H(+). It catalyses the reaction 1-acyl-2-(5Z,8Z,11Z,14Z-eicosatetraenoyl)-sn-glycero-3-phosphocholine + H2O = a 1-acyl-sn-glycero-3-phosphocholine + (5Z,8Z,11Z,14Z)-eicosatetraenoate + H(+). The catalysed reaction is 1-hexadecanoyl-2-(5Z,8Z,11Z,14Z-eicosatetraenoyl)-sn-glycero-3-phosphocholine + H2O = 1-hexadecanoyl-sn-glycero-3-phosphocholine + (5Z,8Z,11Z,14Z)-eicosatetraenoate + H(+). It carries out the reaction 1-octadecanoyl-2-(9Z-octadecenoyl)-sn-glycero-3-phosphocholine + H2O = 1-octadecanoyl-sn-glycero-3-phosphocholine + (9Z)-octadecenoate + H(+). The enzyme catalyses 1-hexadecanoyl-2-(9Z-octadecenoyl)-sn-glycero-3-phosphocholine + H2O = 1-hexadecanoyl-sn-glycero-3-phosphocholine + (9Z)-octadecenoate + H(+). It catalyses the reaction 1-hexadecanoyl-2-(9Z,12Z-octadecadienoyl)-sn-glycero-3-phosphocholine + H2O = (9Z,12Z)-octadecadienoate + 1-hexadecanoyl-sn-glycero-3-phosphocholine + H(+). The catalysed reaction is 1-acyl-2-(9Z,12Z)-octadecadienoyl-sn-glycero-3-phosphoethanolamine + H2O = a 1-acyl-sn-glycero-3-phosphoethanolamine + (9Z,12Z)-octadecadienoate + H(+). It carries out the reaction 1-acyl-2-(5Z,8Z,11Z,14Z)-eicosatetraenoyl-sn-glycero-3-phosphoethanolamine + H2O = a 1-acyl-sn-glycero-3-phosphoethanolamine + (5Z,8Z,11Z,14Z)-eicosatetraenoate + H(+). The enzyme catalyses 1-hexadecanoyl-2-(5Z,8Z,11Z,14Z-eicosatetraenoyl)-sn-glycero-3-phosphoethanolamine + H2O = 1-hexadecanoyl-sn-glycero-3-phosphoethanolamine + (5Z,8Z,11Z,14Z)-eicosatetraenoate + H(+). It catalyses the reaction 1-hexadecanoyl-2-(5Z,8Z,11Z,14Z-eicosatetraenoyl)-sn-glycero-3-phosphocholine + H2O = 2-(5Z,8Z,11Z,14Z)-eicosatetraenoyl-sn-glycero-3-phosphocholine + hexadecanoate + H(+). The catalysed reaction is 1-octadecanoyl-2-(9Z-octadecenoyl)-sn-glycero-3-phosphocholine + H2O = 2-(9Z-octadecenoyl)-sn-glycero-3-phosphocholine + octadecanoate + H(+). It carries out the reaction 1-hexadecanoyl-2-(4Z,7Z,10Z,13Z,16Z,19Z-docosahexaenoyl)-sn-glycero-3-phosphocholine + H2O = 2-(4Z,7Z,10Z,13Z,16Z,19Z-docosahexaenoyl)-sn-glycero-3-phosphocholine + hexadecanoate + H(+). The enzyme catalyses 1-O-(1Z)-hexadecenyl-2 (5Z,8Z,11Z,14Z)-eicosatetraenoyl-sn-glycero-3-phosphocholine + H2O = 1-(1Z-hexadecenyl)-sn-glycero-3-phosphocholine + (5Z,8Z,11Z,14Z)-eicosatetraenoate + H(+). It catalyses the reaction 1-O-(1Z-hexadecenyl)-2-(9Z-octadecenoyl)-sn-glycero-3-phosphocholine + H2O = 1-(1Z-hexadecenyl)-sn-glycero-3-phosphocholine + (9Z)-octadecenoate + H(+). The catalysed reaction is 1-hexadecanoyl-sn-glycero-3-phosphocholine + H2O = sn-glycerol 3-phosphocholine + hexadecanoate + H(+). It carries out the reaction 1',3'-bis-[1,2-di-(9Z,12Z-octadecadienoyl)-sn-glycero-3-phospho]-glycerol + H2O = 1'-[1,2-di-(9Z,12Z-octadecadienoyl)-sn-glycero-3-phospho]-3'-[1-(9Z,12Z-octadecadienoyl)-sn-glycero-3-phospho]-glycerol + (9Z,12Z)-octadecadienoate + H(+). The enzyme catalyses 1'-[1-acyl-2-(9-hydroxy-(10E,12Z)-octadecadienoyl)-sn-glycero-3-phospho]-3'-[1,2-diacyl-sn-glycero-3-phospho]-glycerol + H2O = 9-hydroxy-(10E,12Z)-octadecadienoate + 1'-[1,2-diacyl-sn-glycero-3-phospho],3'-[1-acyl-sn-glycero-3-phospho]-glycerol + H(+). The protein operates within phospholipid metabolism. With respect to regulation, calcium-independent phospholipase. Calcium-independent and membrane-bound phospholipase, that catalyzes the esterolytic cleavage of fatty acids from glycerophospholipids to yield free fatty acids and lysophospholipids, hence regulating membrane physical properties and the release of lipid second messengers and growth factors. Hydrolyzes phosphatidylethanolamine, phosphatidylcholine and probably phosphatidylinositol with a possible preference for the former. Has also a broad substrate specificity in terms of fatty acid moieties, hydrolyzing saturated and mono-unsaturated fatty acids at nearly equal rates from either the sn-1 or sn-2 position in diacyl phosphatidylcholine. However, has a weak activity toward polyunsaturated fatty acids at the sn-2 position, and thereby favors the production of 2-arachidonoyl lysophosphatidylcholine, a key branch point metabolite in eicosanoid signaling. On the other hand, can produce arachidonic acid from the sn-1 position of diacyl phospholipid and from the sn-2 position of arachidonate-containing plasmalogen substrates. Therefore, plays an important role in the mobilization of arachidonic acid in response to cellular stimuli and the generation of lipid second messengers. Can also hydrolyze lysophosphatidylcholine. In the mitochondrial compartment, catalyzes the hydrolysis and release of oxidized aliphatic chains from cardiolipin and integrates mitochondrial bioenergetics and signaling. It is essential for maintaining efficient bioenergetic mitochondrial function through tailoring mitochondrial membrane lipid metabolism and composition. The chain is Calcium-independent phospholipase A2-gamma from Oryctolagus cuniculus (Rabbit).